Reading from the N-terminus, the 288-residue chain is 4-hydroxy-3-methylbut-2-enyl diphosphate reductase (288 aa).

C13 is a [4Fe-4S] cluster binding site. 2 residues coordinate (2E)-4-hydroxy-3-methylbut-2-enyl diphosphate: H41 and H75. Dimethylallyl diphosphate contacts are provided by H41 and H75. Residues H41 and H75 each coordinate isopentenyl diphosphate. [4Fe-4S] cluster is bound at residue C97. (2E)-4-hydroxy-3-methylbut-2-enyl diphosphate is bound at residue H130. Position 130 (H130) interacts with dimethylallyl diphosphate. H130 serves as a coordination point for isopentenyl diphosphate. The Proton donor role is filled by E132. T168 lines the (2E)-4-hydroxy-3-methylbut-2-enyl diphosphate pocket. A [4Fe-4S] cluster-binding site is contributed by C199. S227, S228, N229, and S271 together coordinate (2E)-4-hydroxy-3-methylbut-2-enyl diphosphate. Residues S227, S228, N229, and S271 each coordinate dimethylallyl diphosphate. Isopentenyl diphosphate-binding residues include S227, S228, N229, and S271.

It belongs to the IspH family. [4Fe-4S] cluster serves as cofactor.

The catalysed reaction is isopentenyl diphosphate + 2 oxidized [2Fe-2S]-[ferredoxin] + H2O = (2E)-4-hydroxy-3-methylbut-2-enyl diphosphate + 2 reduced [2Fe-2S]-[ferredoxin] + 2 H(+). It carries out the reaction dimethylallyl diphosphate + 2 oxidized [2Fe-2S]-[ferredoxin] + H2O = (2E)-4-hydroxy-3-methylbut-2-enyl diphosphate + 2 reduced [2Fe-2S]-[ferredoxin] + 2 H(+). The protein operates within isoprenoid biosynthesis; dimethylallyl diphosphate biosynthesis; dimethylallyl diphosphate from (2E)-4-hydroxy-3-methylbutenyl diphosphate: step 1/1. It functions in the pathway isoprenoid biosynthesis; isopentenyl diphosphate biosynthesis via DXP pathway; isopentenyl diphosphate from 1-deoxy-D-xylulose 5-phosphate: step 6/6. Catalyzes the conversion of 1-hydroxy-2-methyl-2-(E)-butenyl 4-diphosphate (HMBPP) into a mixture of isopentenyl diphosphate (IPP) and dimethylallyl diphosphate (DMAPP). Acts in the terminal step of the DOXP/MEP pathway for isoprenoid precursor biosynthesis. The chain is 4-hydroxy-3-methylbut-2-enyl diphosphate reductase from Phocaeicola vulgatus (strain ATCC 8482 / DSM 1447 / JCM 5826 / CCUG 4940 / NBRC 14291 / NCTC 11154) (Bacteroides vulgatus).